The sequence spans 234 residues: Demethylmenaquinone methyltransferase (234 aa).

Residues Thr-58, Asp-79, and 106-107 (NA) each bind S-adenosyl-L-methionine.

The protein belongs to the class I-like SAM-binding methyltransferase superfamily. MenG/UbiE family.

The catalysed reaction is a 2-demethylmenaquinol + S-adenosyl-L-methionine = a menaquinol + S-adenosyl-L-homocysteine + H(+). It functions in the pathway quinol/quinone metabolism; menaquinone biosynthesis; menaquinol from 1,4-dihydroxy-2-naphthoate: step 2/2. Its function is as follows. Methyltransferase required for the conversion of demethylmenaquinol (DMKH2) to menaquinol (MKH2). The sequence is that of Demethylmenaquinone methyltransferase from Bacillus pumilus (strain SAFR-032).